Reading from the N-terminus, the 692-residue chain is Putative ESX-1 scaffolding and assembly protein SaeA (692 aa).

Residues 1–21 show a composition bias toward basic and acidic residues; it reads MGERGELVSDLHPSDDHDADP. Disordered stretches follow at residues 1 to 23 and 87 to 134; these read MGER…DPRL and PAAP…TTGF. Residues 89–107 are compositionally biased toward pro residues; sequence APEPDPPPVPEPQPEPEPG.

Functionally, may be involved in assembly of the ESX-1 / type VII specialized secretion system (T7SS), which exports several proteins including EsxA and EsxB. Involved in DNA conjugation in recipient (MKD8) but not donor (mc(2)155) strain. This chain is Putative ESX-1 scaffolding and assembly protein SaeA (saeA), found in Mycolicibacterium smegmatis (strain MKD8) (Mycobacterium smegmatis).